A 373-amino-acid chain; its full sequence is Polygalacturonase (373 aa).

The signal sequence occupies residues 1 to 24 (MVRNIVSRLCSQLFALPSSSLQER). Cys27 and Cys42 are joined by a disulfide. N-linked (GlcNAc...) asparagine glycans are attached at residues Asn65 and Asn94. PbH1 repeat units follow at residues 136–158 (TGNS…DITG), 159–197 (SSQL…DISS), 198–219 (SDHV…AVTS), 220–240 (GTNI…SIGS), 249–270 (VDGV…RIKS), 278–300 (INNV…DVQQ), 312–333 (TNGV…ASSA), and 345–369 (CSGF…YPTN). The active-site Proton donor is Asp212. An intrachain disulfide couples Cys214 to Cys230. His234 is an active-site residue. N-linked (GlcNAc...) asparagine glycans are attached at residues Asn280 and Asn290. 2 cysteine pairs are disulfide-bonded: Cys340–Cys345 and Cys364–Cys371.

The protein belongs to the glycosyl hydrolase 28 family.

It localises to the secreted. The enzyme catalyses (1,4-alpha-D-galacturonosyl)n+m + H2O = (1,4-alpha-D-galacturonosyl)n + (1,4-alpha-D-galacturonosyl)m.. Its function is as follows. Involved in maceration and soft-rotting of plant tissue. Hydrolyzes the 1,4-alpha glycosidic bonds of de-esterified pectate in the smooth region of the plant cell wall. This chain is Polygalacturonase (PGA), found in Fusarium fujikuroi (Bakanae and foot rot disease fungus).